A 381-amino-acid polypeptide reads, in one-letter code: 3-dehydroquinate synthase (381 aa).

Residues 81–86 (EGEVSK), 115–119 (GVVGD), 139–140 (TS), K152, and K161 contribute to the NAD(+) site. Positions 194, 256, and 274 each coordinate Zn(2+).

The protein belongs to the sugar phosphate cyclases superfamily. Dehydroquinate synthase family. It depends on Co(2+) as a cofactor. The cofactor is Zn(2+). Requires NAD(+) as cofactor.

The protein localises to the cytoplasm. It carries out the reaction 7-phospho-2-dehydro-3-deoxy-D-arabino-heptonate = 3-dehydroquinate + phosphate. Its pathway is metabolic intermediate biosynthesis; chorismate biosynthesis; chorismate from D-erythrose 4-phosphate and phosphoenolpyruvate: step 2/7. Functionally, catalyzes the conversion of 3-deoxy-D-arabino-heptulosonate 7-phosphate (DAHP) to dehydroquinate (DHQ). The protein is 3-dehydroquinate synthase of Rhodopseudomonas palustris (strain BisA53).